Consider the following 416-residue polypeptide: MGKTIAEKILSEKSKSDAYAGDIVVAEIDQIALQDGTAPLAIRQLMELGTEVRAADRTHFFVDHAAPSPRRELSNDQKFIYEFAKKVGADFNPPGEGIIHQIMVERYVKPGDLAVGADSHTCTYGGIGAFSTGMGSTDVAVAIALGKNWFRVPESFRVQLDGSLPKGVFAKDVILKLIGDLGVDGATYKALEFHGECAENMTVEERLTIANMAVECGAKAGIFESDENTRKFLAELGREGDFREVKADEDAEYEKEIYMDVSSLVPVVSKPHNVDNVAEISEVEGTEVNQVYIGTCTNGRLSDLEVAARILKGRKVKEGVRLIVVPASRRVYLQALDKGLIRVFVEAGGMVLNPGCGPCVGIHQGILADGEVCISTQNRNFKGRMGNPNAEIFLASPATAAASAVKGYIADPREFL.

[4Fe-4S] cluster contacts are provided by C296, C356, and C359.

Belongs to the aconitase/IPM isomerase family. LeuC type 2 subfamily. Heterodimer of LeuC and LeuD. [4Fe-4S] cluster is required as a cofactor.

The enzyme catalyses (2R,3S)-3-isopropylmalate = (2S)-2-isopropylmalate. The protein operates within amino-acid biosynthesis; L-leucine biosynthesis; L-leucine from 3-methyl-2-oxobutanoate: step 2/4. In terms of biological role, catalyzes the isomerization between 2-isopropylmalate and 3-isopropylmalate, via the formation of 2-isopropylmaleate. The protein is 3-isopropylmalate dehydratase large subunit 2 of Archaeoglobus fulgidus (strain ATCC 49558 / DSM 4304 / JCM 9628 / NBRC 100126 / VC-16).